We begin with the raw amino-acid sequence, 305 residues long: Oxygen-dependent coproporphyrinogen-III oxidase (305 aa).

Ser-98 provides a ligand contact to substrate. His-102 and His-112 together coordinate a divalent metal cation. Catalysis depends on His-112, which acts as the Proton donor. Residue Asn-114–Arg-116 coordinates substrate. Positions 151 and 181 each coordinate a divalent metal cation. An important for dimerization region spans residues Tyr-246–Glu-281. Gly-264–Arg-266 lines the substrate pocket.

The protein belongs to the aerobic coproporphyrinogen-III oxidase family. In terms of assembly, homodimer. A divalent metal cation serves as cofactor.

Its subcellular location is the cytoplasm. It catalyses the reaction coproporphyrinogen III + O2 + 2 H(+) = protoporphyrinogen IX + 2 CO2 + 2 H2O. It functions in the pathway porphyrin-containing compound metabolism; protoporphyrin-IX biosynthesis; protoporphyrinogen-IX from coproporphyrinogen-III (O2 route): step 1/1. Its function is as follows. Involved in the heme biosynthesis. Catalyzes the aerobic oxidative decarboxylation of propionate groups of rings A and B of coproporphyrinogen-III to yield the vinyl groups in protoporphyrinogen-IX. The protein is Oxygen-dependent coproporphyrinogen-III oxidase of Vibrio vulnificus (strain CMCP6).